A 328-amino-acid chain; its full sequence is Malate dehydrogenase (328 aa).

12–18 (GAAGQIG) contacts NAD(+). 2 residues coordinate substrate: Arg-95 and Arg-101. Residues Asn-108, Gln-115, and 132 to 134 (VGN) each bind NAD(+). Substrate-binding residues include Asn-134 and Arg-165. Catalysis depends on His-190, which acts as the Proton acceptor.

It belongs to the LDH/MDH superfamily. MDH type 2 family.

It carries out the reaction (S)-malate + NAD(+) = oxaloacetate + NADH + H(+). Functionally, catalyzes the reversible oxidation of malate to oxaloacetate. In Polaromonas naphthalenivorans (strain CJ2), this protein is Malate dehydrogenase.